The sequence spans 485 residues: Glutamyl-tRNA(Gln) amidotransferase subunit A (485 aa).

Active-site charge relay system residues include K79 and S154. Residue S178 is the Acyl-ester intermediate of the active site.

It belongs to the amidase family. GatA subfamily. In terms of assembly, heterotrimer of A, B and C subunits.

The catalysed reaction is L-glutamyl-tRNA(Gln) + L-glutamine + ATP + H2O = L-glutaminyl-tRNA(Gln) + L-glutamate + ADP + phosphate + H(+). Allows the formation of correctly charged Gln-tRNA(Gln) through the transamidation of misacylated Glu-tRNA(Gln) in organisms which lack glutaminyl-tRNA synthetase. The reaction takes place in the presence of glutamine and ATP through an activated gamma-phospho-Glu-tRNA(Gln). This is Glutamyl-tRNA(Gln) amidotransferase subunit A from Clostridium botulinum (strain Kyoto / Type A2).